Consider the following 247-residue polypeptide: MNVLSCSINTLKGLYDISGVEVGQHFYWQIGGFQVHGQVLITSWVVIAILLGSATIAVRNPQTIPTGGQNFFEYVLEFIRDVSKTQIGEEYGPWVPFIGTMFLFIFVSNWSGALLPWKIIQLPHGELAAPTNDINTTVALALLTSVAYFYAGLTKKGLGYFGKYIQPTPILLPINILEDFTKPLSLSFRLFGNILADELVVVVLVSLVPLVVPIPVMLLGLFTSGIQALIFATLAAAYIGESMEGHH.

The next 5 membrane-spanning stretches (helical) occupy residues 38–58, 95–115, 134–154, 199–219, and 220–240; these read QVLI…TIAV, VPFI…GALL, INTT…AGLT, LVVV…VMLL, and GLFT…AYIG.

The protein belongs to the ATPase A chain family. In terms of assembly, F-type ATPases have 2 components, CF(1) - the catalytic core - and CF(0) - the membrane proton channel. CF(1) has five subunits: alpha(3), beta(3), gamma(1), delta(1), epsilon(1). CF(0) has four main subunits: a, b, b' and c.

The protein localises to the plastid. It localises to the chloroplast thylakoid membrane. Its function is as follows. Key component of the proton channel; it plays a direct role in the translocation of protons across the membrane. The polypeptide is ATP synthase subunit a, chloroplastic (Nicotiana sylvestris (Wood tobacco)).